A 435-amino-acid chain; its full sequence is Nucleoredoxin (435 aa).

Serine 2 carries the post-translational modification N-acetylserine. The Thioredoxin domain maps to proline 167–valine 321.

It belongs to the nucleoredoxin family. In terms of assembly, associates with the phosphatase 2A holoenzyme. Interacts with PPP2CA; the interaction is direct. Interacts with DVL1 (via PDZ domain); the interaction is direct and regulated by oxidative stress.

Its subcellular location is the cytoplasm. It is found in the cytosol. The protein localises to the nucleus. The enzyme catalyses [protein]-dithiol + NAD(+) = [protein]-disulfide + NADH + H(+). It catalyses the reaction [protein]-dithiol + NADP(+) = [protein]-disulfide + NADPH + H(+). Functions as a redox-dependent negative regulator of the Wnt signaling pathway, possibly by preventing ubiquitination of DVL3 by the BCR(KLHL12) complex. May also function as a transcriptional regulator act as a regulator of protein phosphatase 2A (PP2A). This is Nucleoredoxin (NXN) from Bos taurus (Bovine).